The primary structure comprises 380 residues: Cytochrome b (380 aa).

Transmembrane regions (helical) follow at residues 33–53 (FGSLLGLCLATQILTGLFLAM), 77–98 (WLIRNIHANGASFFFICIYMHI), 113–133 (WNIGVVLLLLTMMTAFVGYVL), and 178–198 (FFAFHFLFPFVIAAATVLHLL). Heme b is bound by residues His83 and His97. Positions 182 and 196 each coordinate heme b. A ubiquinone is bound at residue His201. A run of 4 helical transmembrane segments spans residues 226 to 246 (YKDLLGFVAMLLGLTSLALFA), 288 to 308 (LGGVLALLFSILVLMVVPILH), 320 to 340 (LTQFLFWTLVADMLILTWIGG), and 347 to 367 (FIIIGQVASVIYFTIFLVLAP).

Belongs to the cytochrome b family. In terms of assembly, the cytochrome bc1 complex contains 3 respiratory subunits (MT-CYB, CYC1 and UQCRFS1), 2 core proteins (UQCRC1 and UQCRC2) and probably 6 low-molecular weight proteins. The cofactor is heme b.

Its subcellular location is the mitochondrion inner membrane. Its function is as follows. Component of the ubiquinol-cytochrome c reductase complex (complex III or cytochrome b-c1 complex) that is part of the mitochondrial respiratory chain. The b-c1 complex mediates electron transfer from ubiquinol to cytochrome c. Contributes to the generation of a proton gradient across the mitochondrial membrane that is then used for ATP synthesis. The sequence is that of Cytochrome b (mt-cyb) from Salmo trutta (Brown trout).